The sequence spans 145 residues: D-aminoacyl-tRNA deacylase (145 aa).

Positions 137–138 (GP) match the Gly-cisPro motif, important for rejection of L-amino acids motif.

Belongs to the DTD family. Homodimer.

The protein resides in the cytoplasm. It carries out the reaction glycyl-tRNA(Ala) + H2O = tRNA(Ala) + glycine + H(+). The catalysed reaction is a D-aminoacyl-tRNA + H2O = a tRNA + a D-alpha-amino acid + H(+). An aminoacyl-tRNA editing enzyme that deacylates mischarged D-aminoacyl-tRNAs. Also deacylates mischarged glycyl-tRNA(Ala), protecting cells against glycine mischarging by AlaRS. Acts via tRNA-based rather than protein-based catalysis; rejects L-amino acids rather than detecting D-amino acids in the active site. By recycling D-aminoacyl-tRNA to D-amino acids and free tRNA molecules, this enzyme counteracts the toxicity associated with the formation of D-aminoacyl-tRNA entities in vivo and helps enforce protein L-homochirality. This chain is D-aminoacyl-tRNA deacylase, found in Pseudomonas putida (strain ATCC 47054 / DSM 6125 / CFBP 8728 / NCIMB 11950 / KT2440).